The following is an 87-amino-acid chain: Toxin Cll3 (87 aa).

Residues 1–19 (MNSLLMITACLAVIGTVWA) form the signal peptide. The LCN-type CS-alpha/beta domain occupies 20 to 85 (KEGYIVNYYD…VWPLPNKTCY (66 aa)). Disulfide bonds link Cys31–Cys84, Cys35–Cys60, Cys44–Cys65, and Cys48–Cys67. A Tyrosine amide modification is found at Tyr85.

This sequence belongs to the long (4 C-C) scorpion toxin superfamily. Sodium channel inhibitor family. Beta subfamily. Expressed by the venom gland.

The protein localises to the secreted. Functionally, beta toxins bind voltage-independently at site-4 of sodium channels (Nav) and shift the voltage of activation toward more negative potentials thereby affecting sodium channel activation and promoting spontaneous and repetitive firing. The sequence is that of Toxin Cll3 from Centruroides limpidus (Mexican scorpion).